Consider the following 534-residue polypeptide: MKLLAVRRLLRIQRVVIRYRLDDLLFDLPLPWFLLALRYVLPWRWFPRKPLELSRGARLRLALQDLGPIFIKFGQILSTRRDLLPEDIADELMRLQDRVPPFDSQLSVKLIEEQLGKKISEVFSRFDVEPLASASVAQVHAAQLKTGEEVVVKVIRPGLKPIIAQDLAWLFILARAAEKVSADARLLHPVDVVSDYEKTIYDELDLLREAANASQLKRNFEGSPLLYVPQVYWDWCRPKVLVMERIYGIQVTDLATLADQRTDMKMLAERGVEIFFTQVFRDSFFHADMHPGNIFVSTVNPWSPQYIAIDCGIVGSLTPEDQDYLARNLFAFFKRDYRRVAQLHIDSGWVPAETKLNEFEAAIRTVCEPIFEKPLKDISFGQVLMRLFQTARRFNMEVQPQLVLLQKTLLNIEGLGRQLYPDLDLWNTAQPFLERWMRERVSPKALLGNVQSQFEQLPHLANMARDLLERMSQPHANDPPPPWKKRKDDWFLRLLGSAHLAGGTILAAGGPLHELGHWPAGIMVAVGLYLVVRR.

A helical transmembrane segment spans residues 23 to 43 (DLLFDLPLPWFLLALRYVLPW). Residues 125–492 (RFDVEPLASA…WKKRKDDWFL (368 aa)) enclose the Protein kinase domain. ATP-binding positions include 131–139 (LASASVAQV) and Lys-153. The active-site Proton acceptor is the Asp-288. Helical transmembrane passes span 490-510 (WFLR…AAGG) and 512-532 (LHEL…YLVV).

It belongs to the ABC1 family. UbiB subfamily.

It is found in the cell inner membrane. It participates in cofactor biosynthesis; ubiquinone biosynthesis [regulation]. Functionally, is probably a protein kinase regulator of UbiI activity which is involved in aerobic coenzyme Q (ubiquinone) biosynthesis. The chain is Probable protein kinase UbiB from Pseudomonas fluorescens (strain Pf0-1).